The primary structure comprises 369 residues: NADH-quinone oxidoreductase subunit H (369 aa).

8 helical membrane-spanning segments follow: residues 20 to 40 (VLLI…AYLV), 88 to 108 (ICFL…WAVI), 133 to 153 (IGVL…IIAG), 179 to 199 (IGLT…GEIV), 205 to 225 (MPYW…ISSL), 267 to 287 (ILIN…PLNI), 293 to 313 (IPGI…FIWI), and 328 to 348 (LGWK…SGVL).

The protein belongs to the complex I subunit 1 family. NDH-1 is composed of 14 different subunits. Subunits NuoA, H, J, K, L, M, N constitute the membrane sector of the complex.

It localises to the cell inner membrane. The catalysed reaction is a quinone + NADH + 5 H(+)(in) = a quinol + NAD(+) + 4 H(+)(out). In terms of biological role, NDH-1 shuttles electrons from NADH, via FMN and iron-sulfur (Fe-S) centers, to quinones in the respiratory chain. The immediate electron acceptor for the enzyme in this species is believed to be ubiquinone. Couples the redox reaction to proton translocation (for every two electrons transferred, four hydrogen ions are translocated across the cytoplasmic membrane), and thus conserves the redox energy in a proton gradient. This subunit may bind ubiquinone. The protein is NADH-quinone oxidoreductase subunit H of Ehrlichia canis (strain Jake).